The sequence spans 47 residues: Putative beta-neurotoxin (47 aa).

In terms of domain architecture, LCN-type CS-alpha/beta spans 1 to 47 (KEGYMGSDGCKMSCVINDQFCDTECQAKLKGSTGYCYFXGLACYXXG). 2 disulfide bridges follow: cysteine 14/cysteine 36 and cysteine 21/cysteine 43.

Expressed by the venom gland.

It is found in the secreted. In terms of biological role, causes transient paralysis of the rear legs of and spasms in insects (A.domestica). The protein is Putative beta-neurotoxin of Rhopalurus junceus (Caribbean blue scorpion).